The sequence spans 201 residues: MELTLKDAKGALEVSEATFGREFNEALVHQVVVAYAAGARQGTKAQKTRSEVAGGGKKPWRQKGTGRARAGTIRSPIWRSGGATFAAKPQNHSQKVNKKMYRGAIKSILSELIRQERLIVVEKFGVDEPKTKQLAAKLKEMDLNDVLIVTKEVDENLFLASRNLHKVDVRDVQGIDPVSLIAFEKVLMTADAVKQLEEVLS.

Positions 43-69 are disordered; it reads TKAQKTRSEVAGGGKKPWRQKGTGRAR.

The protein belongs to the universal ribosomal protein uL4 family. As to quaternary structure, part of the 50S ribosomal subunit.

Its function is as follows. One of the primary rRNA binding proteins, this protein initially binds near the 5'-end of the 23S rRNA. It is important during the early stages of 50S assembly. It makes multiple contacts with different domains of the 23S rRNA in the assembled 50S subunit and ribosome. Forms part of the polypeptide exit tunnel. This Idiomarina loihiensis (strain ATCC BAA-735 / DSM 15497 / L2-TR) protein is Large ribosomal subunit protein uL4.